The following is a 597-amino-acid chain: Adenine deaminase 2 (597 aa).

Belongs to the metallo-dependent hydrolases superfamily. Adenine deaminase family. It depends on Mn(2+) as a cofactor.

The enzyme catalyses adenine + H2O + H(+) = hypoxanthine + NH4(+). In Agrobacterium fabrum (strain C58 / ATCC 33970) (Agrobacterium tumefaciens (strain C58)), this protein is Adenine deaminase 2.